Reading from the N-terminus, the 391-residue chain is Bifunctional enzyme IspD/IspF (391 aa).

The interval 1-230 (MLAAGRGKRA…KKKMQMFPDI (230 aa)) is 2-C-methyl-D-erythritol 4-phosphate cytidylyltransferase. The tract at residues 231-391 (RTGNGYDVHS…TVLYPGEIPK (161 aa)) is 2-C-methyl-D-erythritol 2,4-cyclodiphosphate synthase. 2 residues coordinate a divalent metal cation: Asp237 and His239. 4-CDP-2-C-methyl-D-erythritol 2-phosphate-binding positions include 237-239 (DVH) and 263-264 (HS). A divalent metal cation is bound at residue His271. 4-CDP-2-C-methyl-D-erythritol 2-phosphate is bound by residues 285–287 (DIG), 361–364 (TTNE), Phe368, and Arg371.

It in the N-terminal section; belongs to the IspD/TarI cytidylyltransferase family. IspD subfamily. In the C-terminal section; belongs to the IspF family. A divalent metal cation serves as cofactor.

The enzyme catalyses 2-C-methyl-D-erythritol 4-phosphate + CTP + H(+) = 4-CDP-2-C-methyl-D-erythritol + diphosphate. It carries out the reaction 4-CDP-2-C-methyl-D-erythritol 2-phosphate = 2-C-methyl-D-erythritol 2,4-cyclic diphosphate + CMP. It participates in isoprenoid biosynthesis; isopentenyl diphosphate biosynthesis via DXP pathway; isopentenyl diphosphate from 1-deoxy-D-xylulose 5-phosphate: step 2/6. The protein operates within isoprenoid biosynthesis; isopentenyl diphosphate biosynthesis via DXP pathway; isopentenyl diphosphate from 1-deoxy-D-xylulose 5-phosphate: step 4/6. Bifunctional enzyme that catalyzes the formation of 4-diphosphocytidyl-2-C-methyl-D-erythritol from CTP and 2-C-methyl-D-erythritol 4-phosphate (MEP) (IspD), and catalyzes the conversion of 4-diphosphocytidyl-2-C-methyl-D-erythritol 2-phosphate (CDP-ME2P) to 2-C-methyl-D-erythritol 2,4-cyclodiphosphate (ME-CPP) with a corresponding release of cytidine 5-monophosphate (CMP) (IspF). This is Bifunctional enzyme IspD/IspF from Bartonella quintana (strain Toulouse) (Rochalimaea quintana).